The chain runs to 337 residues: Glyceraldehyde-3-phosphate dehydrogenase (337 aa).

Residues Arg13–Ile14, Asp35, and Arg80 each bind NAD(+). D-glyceraldehyde 3-phosphate-binding positions include Ser151–Thr153, Thr182, Thr211–Gly212, and Arg234. The Nucleophile role is filled by Cys152. Asn316 lines the NAD(+) pocket.

This sequence belongs to the glyceraldehyde-3-phosphate dehydrogenase family. In terms of assembly, homotetramer.

The protein resides in the cytoplasm. It carries out the reaction D-glyceraldehyde 3-phosphate + phosphate + NAD(+) = (2R)-3-phospho-glyceroyl phosphate + NADH + H(+). The protein operates within carbohydrate degradation; glycolysis; pyruvate from D-glyceraldehyde 3-phosphate: step 1/5. The sequence is that of Glyceraldehyde-3-phosphate dehydrogenase (GPD1) from Monascus purpureus (Red mold).